We begin with the raw amino-acid sequence, 72 residues long: MHYLLTKPNPKKAGADFVSELIASKLLFGNSYILSALDSYPKEIYLLPALVTELVIEHNNLVSYFDLKLFVR.

The protein belongs to the phage portal family. HK97 subfamily.

This is an uncharacterized protein from Rickettsia conorii (strain ATCC VR-613 / Malish 7).